The chain runs to 125 residues: Large ribosomal subunit protein bL12 (125 aa).

Belongs to the bacterial ribosomal protein bL12 family. In terms of assembly, homodimer. Part of the ribosomal stalk of the 50S ribosomal subunit. Forms a multimeric L10(L12)X complex, where L10 forms an elongated spine to which 2 to 4 L12 dimers bind in a sequential fashion. Binds GTP-bound translation factors.

Its function is as follows. Forms part of the ribosomal stalk which helps the ribosome interact with GTP-bound translation factors. Is thus essential for accurate translation. In Porphyromonas gingivalis (strain ATCC 33277 / DSM 20709 / CIP 103683 / JCM 12257 / NCTC 11834 / 2561), this protein is Large ribosomal subunit protein bL12.